The following is a 146-amino-acid chain: Large ribosomal subunit protein uL15 (146 aa).

Residues 1-58 (MKLNELSPPKGARTARKRKGRGPGSGLGKTAGKGHKGQKARSGGGVRPGFEGGQMPVH) form a disordered region. 2 stretches are compositionally biased toward gly residues: residues 22-31 (GPGSGLGKTA) and 42-52 (SGGGVRPGFEG).

This sequence belongs to the universal ribosomal protein uL15 family. As to quaternary structure, part of the 50S ribosomal subunit.

Its function is as follows. Binds to the 23S rRNA. This chain is Large ribosomal subunit protein uL15, found in Desulfatibacillum aliphaticivorans.